Consider the following 434-residue polypeptide: Na(+)/H(+) antiporter NhaA 1 (434 aa).

The segment covering 1–15 (MISPNPALPTPPHAP) has biased composition (pro residues). Positions 1-21 (MISPNPALPTPPHAPTAPGRG) are disordered. 12 consecutive transmembrane segments (helical) span residues 34–54 (GGIL…SPAA), 74–94 (LSVS…VVGL), 112–132 (ALPI…FTLI), 143–163 (GWAI…AVVG), 173–193 (FLLT…AVFY), 196–216 (GIAF…GILV), 222–242 (AWYV…ASGI), 245–265 (TIAG…RAGV), 294–314 (IAVP…LEGL), 326–346 (IIVA…LLVA), 362–382 (VLGL…VGEL), and 393–413 (AVKV…GTLL).

It belongs to the NhaA Na(+)/H(+) (TC 2.A.33) antiporter family.

The protein localises to the cell membrane. It catalyses the reaction Na(+)(in) + 2 H(+)(out) = Na(+)(out) + 2 H(+)(in). Functionally, na(+)/H(+) antiporter that extrudes sodium in exchange for external protons. The protein is Na(+)/H(+) antiporter NhaA 1 of Clavibacter michiganensis subsp. michiganensis (strain NCPPB 382).